The sequence spans 397 residues: DNA-directed RNA polymerase subunit Rpo1C (397 aa).

Belongs to the RNA polymerase beta' chain family. As to quaternary structure, part of the RNA polymerase complex.

The protein resides in the cytoplasm. The catalysed reaction is RNA(n) + a ribonucleoside 5'-triphosphate = RNA(n+1) + diphosphate. In terms of biological role, DNA-dependent RNA polymerase (RNAP) catalyzes the transcription of DNA into RNA using the four ribonucleoside triphosphates as substrates. Forms part of the jaw domain. This Halobacterium salinarum (strain ATCC 29341 / DSM 671 / R1) protein is DNA-directed RNA polymerase subunit Rpo1C.